Here is a 185-residue protein sequence, read N- to C-terminus: Adenine phosphoribosyltransferase (185 aa).

The protein belongs to the purine/pyrimidine phosphoribosyltransferase family. Homodimer.

It localises to the cytoplasm. It carries out the reaction AMP + diphosphate = 5-phospho-alpha-D-ribose 1-diphosphate + adenine. It functions in the pathway purine metabolism; AMP biosynthesis via salvage pathway; AMP from adenine: step 1/1. Its function is as follows. Catalyzes a salvage reaction resulting in the formation of AMP, that is energically less costly than de novo synthesis. The chain is Adenine phosphoribosyltransferase from Kineococcus radiotolerans (strain ATCC BAA-149 / DSM 14245 / SRS30216).